The sequence spans 396 residues: DNA polymerase interacting tetratricopeptide repeat-containing, protein of 47 kDa (396 aa).

3 TPR repeats span residues 91–124 (ALNYKEDGNFYMKHKKFRMAIYSFTEGIKTKTDN), 129–162 (AVLYNNRSAAHFFIKNYRSSLSDAQRALFYKPDY), and 163–196 (TKARWRSAQCAYELERFDLCTQMCEELLEVDVDN).

Belongs to the TTC4 family. Forms a complex with Hsp83 and Hsp70aa. Interacts with DNApol-alpha180; the interaction inhibits the activity of the DNA polymerase and occurs only in proliferating cells but not in quiescent cells. More abundant in young embryos, pupae and females and a lower level expression seen in late embryos, larvae and males.

The protein localises to the nucleus. The protein resides in the nucleoplasm. Its subcellular location is the cytoplasm. Functionally, may act as a co-chaperone for HSP83. In Drosophila melanogaster (Fruit fly), this protein is DNA polymerase interacting tetratricopeptide repeat-containing, protein of 47 kDa (Dpit47).